The following is a 471-amino-acid chain: Siroheme synthase (471 aa).

The precorrin-2 dehydrogenase /sirohydrochlorin ferrochelatase stretch occupies residues 1–203 (MEYLPLFADL…GRLEQAEQAL (203 aa)). NAD(+) is bound by residues 22-23 (EV) and 43-44 (RA). A Phosphoserine modification is found at S128. The tract at residues 215–471 (GEVALVGAGP…QKRASVVNLA (257 aa)) is uroporphyrinogen-III C-methyltransferase. P224 contributes to the S-adenosyl-L-methionine binding site. Residue D247 is the Proton acceptor of the active site. K269 serves as the catalytic Proton donor. S-adenosyl-L-methionine contacts are provided by residues 300-302 (GGD), I305, 330-331 (TA), M382, and G411.

It in the N-terminal section; belongs to the precorrin-2 dehydrogenase / sirohydrochlorin ferrochelatase family. In the C-terminal section; belongs to the precorrin methyltransferase family.

The enzyme catalyses uroporphyrinogen III + 2 S-adenosyl-L-methionine = precorrin-2 + 2 S-adenosyl-L-homocysteine + H(+). It carries out the reaction precorrin-2 + NAD(+) = sirohydrochlorin + NADH + 2 H(+). The catalysed reaction is siroheme + 2 H(+) = sirohydrochlorin + Fe(2+). The protein operates within cofactor biosynthesis; adenosylcobalamin biosynthesis; precorrin-2 from uroporphyrinogen III: step 1/1. It participates in cofactor biosynthesis; adenosylcobalamin biosynthesis; sirohydrochlorin from precorrin-2: step 1/1. Its pathway is porphyrin-containing compound metabolism; siroheme biosynthesis; precorrin-2 from uroporphyrinogen III: step 1/1. It functions in the pathway porphyrin-containing compound metabolism; siroheme biosynthesis; siroheme from sirohydrochlorin: step 1/1. The protein operates within porphyrin-containing compound metabolism; siroheme biosynthesis; sirohydrochlorin from precorrin-2: step 1/1. In terms of biological role, multifunctional enzyme that catalyzes the SAM-dependent methylations of uroporphyrinogen III at position C-2 and C-7 to form precorrin-2 via precorrin-1. Then it catalyzes the NAD-dependent ring dehydrogenation of precorrin-2 to yield sirohydrochlorin. Finally, it catalyzes the ferrochelation of sirohydrochlorin to yield siroheme. This is Siroheme synthase from Sodalis glossinidius (strain morsitans).